A 2560-amino-acid chain; its full sequence is Plipastatin synthase subunit B (2560 aa).

The condensation 1 stretch occupies residues 7–310 (IQDIYPLSHM…NTVPVRIRSA (304 aa)). The tract at residues 7-1042 (IQDIYPLSHM…AVKLMSLKEH (1036 aa)) is domain 1 (tyrosine-activating). Residues 496 to 889 (TYRQLQVRAN…QAPGVKEAAV (394 aa)) form an adenylation 1 region. The Carrier 1 domain maps to 965–1040 (APRTLIEADL…SMAVKLMSLK (76 aa)). O-(pantetheine 4'-phosphoryl)serine is present on Ser1000. Residues 1052 to 1342 (QRDVYPLSFS…NTLAMRSKPE (291 aa)) are condensation 2. Residues 1052–2553 (QRDVYPLSFS…DLTLDELSEI (1502 aa)) form a domain 2 (D-allo-threonine-activating) region. Residues 1527 to 1927 (TYRDLNEKAE…QYPMIKEAAV (401 aa)) form an adenylation 2 region. One can recognise a Carrier 2 domain in the interval 2006-2080 (SPRNEIETVM…ELSARVRKDV (75 aa)). Ser2041 carries the O-(pantetheine 4'-phosphoryl)serine modification. The tract at residues 2088–2553 (VEGEITWTPI…DLTLDELSEI (466 aa)) is epimerization.

Belongs to the ATP-dependent AMP-binding enzyme family. Pantetheine 4'-phosphate serves as cofactor.

This protein is a multifunctional enzyme, able to activate and polymerize the amino acids Tyr and Thr as part of the biosynthesis of the lipopeptide antibiotic plipastatin. The Thr residue is further converted to the D-allo-isomer form. The activation sites for these amino acids consist of individual domains. The polypeptide is Plipastatin synthase subunit B (ppsB) (Bacillus subtilis (strain 168)).